The following is a 698-amino-acid chain: FHF complex subunit HOOK-interacting protein 2B (698 aa).

It belongs to the FHIP family.

This chain is FHF complex subunit HOOK-interacting protein 2B (fhip2b), found in Xenopus tropicalis (Western clawed frog).